Reading from the N-terminus, the 397-residue chain is Elongation factor Tu-1 (397 aa).

In terms of domain architecture, tr-type G spans 10–206 (KPHVNIGTIG…AVDENIPEPE (197 aa)). A G1 region spans residues 19 to 26 (GHIDHGKT). 19–26 (GHIDHGKT) contacts GTP. Thr26 serves as a coordination point for Mg(2+). The G2 stretch occupies residues 62-66 (GITIS). The interval 83–86 (DCPG) is G3. Residues 83-87 (DCPGH) and 138-141 (NKAD) each bind GTP. Residues 138–141 (NKAD) are G4. Residues 176–178 (SAL) are G5. Thr386 is modified (phosphothreonine).

The protein belongs to the TRAFAC class translation factor GTPase superfamily. Classic translation factor GTPase family. EF-Tu/EF-1A subfamily. As to quaternary structure, monomer. In terms of processing, phosphorylated on threonine and serine.

Its subcellular location is the cytoplasm. It carries out the reaction GTP + H2O = GDP + phosphate + H(+). GTP hydrolase that promotes the GTP-dependent binding of aminoacyl-tRNA to the A-site of ribosomes during protein biosynthesis. In Streptomyces collinus, this protein is Elongation factor Tu-1.